Here is a 591-residue protein sequence, read N- to C-terminus: V-type ATP synthase alpha chain (591 aa).

233 to 240 (GPFGAGKT) lines the ATP pocket.

This sequence belongs to the ATPase alpha/beta chains family.

The catalysed reaction is ATP + H2O + 4 H(+)(in) = ADP + phosphate + 5 H(+)(out). In terms of biological role, produces ATP from ADP in the presence of a proton gradient across the membrane. The V-type alpha chain is a catalytic subunit. This is V-type ATP synthase alpha chain from Streptococcus pyogenes serotype M28 (strain MGAS6180).